The following is a 93-amino-acid chain: SH3 domain-binding glutamic acid-rich-like protein 3 (93 aa).

An N-acetylserine modification is found at serine 2. In terms of domain architecture, Glutaredoxin spans 2–93; that stretch reads SGLRVYSTSV…DTLQEFLKLA (92 aa). O-linked (GalNAc...) threonine glycosylation is present at threonine 9.

Belongs to the SH3BGR family. As to quaternary structure, homodimer. Interacts with MYO1C (via its IQ motifs); the interaction is dependent on calcium and takes place at membrane ruffles. Post-translationally, may be glycosylated.

Its subcellular location is the cytoplasm. It is found in the cytosol. The protein resides in the cell projection. It localises to the ruffle membrane. The protein localises to the nucleus. In terms of biological role, could act as a modulator of glutaredoxin biological activity. May play a role in cytoskeleton organization. This is SH3 domain-binding glutamic acid-rich-like protein 3 (Sh3bgrl3) from Mus musculus (Mouse).